Consider the following 259-residue polypeptide: Tryptophan synthase alpha chain (259 aa).

Active-site proton acceptor residues include E42 and D53.

It belongs to the TrpA family. As to quaternary structure, tetramer of two alpha and two beta chains.

The catalysed reaction is (1S,2R)-1-C-(indol-3-yl)glycerol 3-phosphate + L-serine = D-glyceraldehyde 3-phosphate + L-tryptophan + H2O. Its pathway is amino-acid biosynthesis; L-tryptophan biosynthesis; L-tryptophan from chorismate: step 5/5. Its function is as follows. The alpha subunit is responsible for the aldol cleavage of indoleglycerol phosphate to indole and glyceraldehyde 3-phosphate. This Erythrobacter litoralis (strain HTCC2594) protein is Tryptophan synthase alpha chain.